A 177-amino-acid polypeptide reads, in one-letter code: Translationally-controlled tumor protein homolog (177 aa).

Residues 1–177 enclose the TCTP domain; sequence MIIYRDLFSG…IKQGLVVEKC (177 aa).

Belongs to the TCTP family.

Its subcellular location is the cytoplasm. In terms of biological role, involved in calcium binding and microtubule stabilization. The protein is Translationally-controlled tumor protein homolog of Trichinella pseudospiralis (Parasitic roundworm).